Here is a 356-residue protein sequence, read N- to C-terminus: Homoserine O-acetyltransferase (356 aa).

Positions 49-337 (VLICHALTGS…KSTHGHDAFL (289 aa)) constitute an AB hydrolase-1 domain. Catalysis depends on serine 143, which acts as the Nucleophile. Substrate is bound at residue arginine 212. Residues aspartate 304 and histidine 333 contribute to the active site. Aspartate 334 contributes to the substrate binding site.

This sequence belongs to the AB hydrolase superfamily. MetX family. As to quaternary structure, homodimer.

It localises to the cytoplasm. It catalyses the reaction L-homoserine + acetyl-CoA = O-acetyl-L-homoserine + CoA. The protein operates within amino-acid biosynthesis; L-methionine biosynthesis via de novo pathway; O-acetyl-L-homoserine from L-homoserine: step 1/1. Its function is as follows. Transfers an acetyl group from acetyl-CoA to L-homoserine, forming acetyl-L-homoserine. This Nostoc punctiforme (strain ATCC 29133 / PCC 73102) protein is Homoserine O-acetyltransferase.